The sequence spans 339 residues: AB hydrolase superfamily protein B1A11.02 (339 aa).

Belongs to the AB hydrolase superfamily.

This Schizosaccharomyces pombe (strain 972 / ATCC 24843) (Fission yeast) protein is AB hydrolase superfamily protein B1A11.02.